A 221-amino-acid polypeptide reads, in one-letter code: Molybdenum cofactor guanylyltransferase (221 aa).

GTP is bound by residues 18–20 (IAG), K35, N63, D81, and D112. D112 provides a ligand contact to Mg(2+).

Belongs to the MobA family. In terms of assembly, monomer. It depends on Mg(2+) as a cofactor.

The protein localises to the cytoplasm. It catalyses the reaction Mo-molybdopterin + GTP + H(+) = Mo-molybdopterin guanine dinucleotide + diphosphate. In terms of biological role, transfers a GMP moiety from GTP to Mo-molybdopterin (Mo-MPT) cofactor (Moco or molybdenum cofactor) to form Mo-molybdopterin guanine dinucleotide (Mo-MGD) cofactor. In Brucella abortus (strain S19), this protein is Molybdenum cofactor guanylyltransferase.